A 60-amino-acid polypeptide reads, in one-letter code: Small ribosomal subunit protein uS10 (60 aa).

This sequence belongs to the universal ribosomal protein uS10 family.

In Zea mays (Maize), this protein is Small ribosomal subunit protein uS10 (RPS20).